A 477-amino-acid polypeptide reads, in one-letter code: Probable ribonuclease FAU-1 (477 aa).

Belongs to the FAU-1 family.

Its function is as follows. Probable RNase involved in rRNA stability through maturation and/or degradation of precursor rRNAs. Binds to RNA in loop regions with AU-rich sequences. This chain is Probable ribonuclease FAU-1, found in Staphylothermus marinus (strain ATCC 43588 / DSM 3639 / JCM 9404 / F1).